The following is a 130-amino-acid chain: Protein ApaG (130 aa).

The ApaG domain maps to Ser3–Arg127.

This is Protein ApaG from Brucella abortus (strain S19).